Here is a 245-residue protein sequence, read N- to C-terminus: UDP-N-acetyl-D-mannosaminuronic acid transferase (245 aa).

Belongs to the glycosyltransferase 26 family.

The enzyme catalyses UDP-N-acetyl-alpha-D-mannosaminouronate + N-acetyl-alpha-D-glucosaminyl-di-trans,octa-cis-undecaprenyl diphosphate = beta-D-ManNAcA-(1-&gt;4)-alpha-D-GlcNAc-di-trans,octa-cis-undecaprenyl diphosphate + UDP + H(+). It participates in bacterial outer membrane biogenesis; enterobacterial common antigen biosynthesis. In terms of biological role, catalyzes the synthesis of Und-PP-GlcNAc-ManNAcA (Lipid II), the second lipid-linked intermediate involved in enterobacterial common antigen (ECA) synthesis. The protein is UDP-N-acetyl-D-mannosaminuronic acid transferase of Proteus mirabilis (strain HI4320).